The chain runs to 296 residues: Phosphatidylglycerol--prolipoprotein diacylglyceryl transferase (296 aa).

4 consecutive transmembrane segments (helical) span residues 10-30, 57-77, 92-112, and 119-139; these read IAFSLGPVQVHWYGLMYLAAF, LLFYGMLGVVLGGRIGYMLFY, VWEGGMSFHGGLLGVLIACWL, and LHFFDVMDFVAPLVPLGLGFG. Residue arginine 140 participates in a 1,2-diacyl-sn-glycero-3-phospho-(1'-sn-glycerol) binding. Transmembrane regions (helical) follow at residues 194–214, 220–240, and 254–274; these read QLYEAALEGVVMFVVLWTFSM, YAVSGLFALLYGVFRFIVEFV, and WLTMGQILSLPLVAVGLVLLA.

This sequence belongs to the Lgt family.

Its subcellular location is the cell inner membrane. It carries out the reaction L-cysteinyl-[prolipoprotein] + a 1,2-diacyl-sn-glycero-3-phospho-(1'-sn-glycerol) = an S-1,2-diacyl-sn-glyceryl-L-cysteinyl-[prolipoprotein] + sn-glycerol 1-phosphate + H(+). Its pathway is protein modification; lipoprotein biosynthesis (diacylglyceryl transfer). In terms of biological role, catalyzes the transfer of the diacylglyceryl group from phosphatidylglycerol to the sulfhydryl group of the N-terminal cysteine of a prolipoprotein, the first step in the formation of mature lipoproteins. The protein is Phosphatidylglycerol--prolipoprotein diacylglyceryl transferase of Xanthomonas axonopodis pv. citri (strain 306).